We begin with the raw amino-acid sequence, 299 residues long: Tyrosine recombinase XerD (299 aa).

The region spanning 2–89 is the Core-binding (CB) domain; that stretch reads ETVNNNLQQF…AIRSFHQFLL (88 aa). Residues 110–293 form the Tyr recombinase domain; the sequence is RLPKALTIEE…TKTRMRDVYA (184 aa). Residues Arg150, Lys174, His245, Arg248, and His271 contribute to the active site. Tyr280 (O-(3'-phospho-DNA)-tyrosine intermediate) is an active-site residue.

Belongs to the 'phage' integrase family. XerD subfamily. As to quaternary structure, forms a cyclic heterotetrameric complex composed of two molecules of XerC and two molecules of XerD.

The protein localises to the cytoplasm. Its function is as follows. Site-specific tyrosine recombinase, which acts by catalyzing the cutting and rejoining of the recombining DNA molecules. The XerC-XerD complex is essential to convert dimers of the bacterial chromosome into monomers to permit their segregation at cell division. It also contributes to the segregational stability of plasmids. The polypeptide is Tyrosine recombinase XerD (Halalkalibacterium halodurans (strain ATCC BAA-125 / DSM 18197 / FERM 7344 / JCM 9153 / C-125) (Bacillus halodurans)).